The following is a 1466-amino-acid chain: ABC transporter G family member 10 (1466 aa).

Low complexity predominate over residues 23-45; it reads NTPQYENNNNNNNNTSGNESPNI. The segment at 23-47 is disordered; sequence NTPQYENNNNNNNNTSGNESPNILN. Residues 138-392 form the ABC transporter 1 domain; the sequence is VTIFNLFRPS…FLDLGFDCEP (255 aa). In terms of domain architecture, ABC transmembrane type-2 1 spans 497–724; the sequence is WGDRFALISK…NGSTMSYQDQ (228 aa). The next 6 helical transmembrane spans lie at 501-521, 537-557, 586-606, 611-631, 641-661, and 767-787; these read FALI…ASLF, AIYA…GLTF, IPLT…MYGL, GKFF…VAFF, LYVS…YGGY, and IITF…LELF. An ABC transporter 2 domain is found at 838 to 1082; that stretch reads FTWNHIHYTV…LTSYFERNGV (245 aa). Residue 874 to 881 participates in ATP binding; sequence GSSGAGKT. The ABC transmembrane type-2 2 domain maps to 1177–1399; the sequence is SYVYGIFTQA…LTCKEYFKPT (223 aa). 6 consecutive transmembrane segments (helical) span residues 1178–1198, 1214–1234, 1253–1273, 1290–1310, 1319–1339, and 1440–1460; these read YVYG…FTFW, IFEI…QFLI, FAIS…TICF, FYFY…GQVV, LAQT…GVLV, and YGIL…FVYL.

This sequence belongs to the ABC transporter superfamily. ABCG family. PDR (TC 3.A.1.205) subfamily.

Its subcellular location is the membrane. The chain is ABC transporter G family member 10 (abcG10) from Dictyostelium discoideum (Social amoeba).